Here is a 476-residue protein sequence, read N- to C-terminus: uncharacterized protein (476 aa).

Belongs to the herpesviridae US22 family.

This is an uncharacterized protein from Homo sapiens (Human).